The primary structure comprises 94 residues: MLKPLGNRVIIEKKEQEQTTKSGIVLTDSAKEKSNEGVIIAVGQGRLLDNGTQVAPQVSEGDTIVFQQYAGTEVKRGDKTYLILNEEDILAIIE.

It belongs to the GroES chaperonin family. In terms of assembly, heptamer of 7 subunits arranged in a ring. Interacts with the chaperonin GroEL.

The protein localises to the cytoplasm. Functionally, together with the chaperonin GroEL, plays an essential role in assisting protein folding. The GroEL-GroES system forms a nano-cage that allows encapsulation of the non-native substrate proteins and provides a physical environment optimized to promote and accelerate protein folding. GroES binds to the apical surface of the GroEL ring, thereby capping the opening of the GroEL channel. This Staphylococcus epidermidis (strain ATCC 35984 / DSM 28319 / BCRC 17069 / CCUG 31568 / BM 3577 / RP62A) protein is Co-chaperonin GroES.